The sequence spans 308 residues: Aspartate carbamoyltransferase catalytic subunit (308 aa).

2 residues coordinate carbamoyl phosphate: R57 and T58. Position 86 (K86) interacts with L-aspartate. Carbamoyl phosphate is bound by residues R107, H135, and Q138. L-aspartate contacts are provided by R167 and R228. Carbamoyl phosphate is bound by residues L267 and P268.

This sequence belongs to the aspartate/ornithine carbamoyltransferase superfamily. ATCase family. Heterooligomer of catalytic and regulatory chains.

It catalyses the reaction carbamoyl phosphate + L-aspartate = N-carbamoyl-L-aspartate + phosphate + H(+). It participates in pyrimidine metabolism; UMP biosynthesis via de novo pathway; (S)-dihydroorotate from bicarbonate: step 2/3. Catalyzes the condensation of carbamoyl phosphate and aspartate to form carbamoyl aspartate and inorganic phosphate, the committed step in the de novo pyrimidine nucleotide biosynthesis pathway. This Methanosarcina acetivorans (strain ATCC 35395 / DSM 2834 / JCM 12185 / C2A) protein is Aspartate carbamoyltransferase catalytic subunit.